Reading from the N-terminus, the 192-residue chain is Iron sulfur cluster assembly protein 1, mitochondrial (192 aa).

The transit peptide at 1–53 (MSVFRRSVQCVGVLPSILAQRSSLLARPANLQFLKTNSSKFVPQVTANVSRRM) directs the protein to the mitochondrion.

It belongs to the NifU family. In terms of assembly, homodimer. Component of the core Fe-S cluster (ISC) assembly machinery. The cofactor is [2Fe-2S] cluster.

The protein localises to the mitochondrion. The protein resides in the mitochondrion matrix. It participates in cofactor biosynthesis; iron-sulfur cluster biosynthesis. In terms of biological role, scaffold protein for the de novo synthesis of iron-sulfur (Fe-S) clusters within mitochondria, which is required for maturation of both mitochondrial and cytoplasmic [2Fe-2S] and [4Fe-4S] proteins. First, a [2Fe-2S] cluster is transiently assembled on the scaffold protein isu1. In a second step, the cluster is released from isu1, transferred to a glutaredoxin, followed by the formation of mitochondrial [2Fe-2S] proteins, the synthesis of [4Fe-4S] clusters and their target-specific insertion into the recipient apoproteins. Cluster assembly on isu1 depends on the function of the cysteine desulfurase complex nfs1-isd11, which serves as the sulfur donor for cluster synthesis, the iron-binding protein frataxin as the putative iron donor, and the electron transfer chain comprised of ferredoxin reductase and ferredoxin, which receive their electrons from NADH. The polypeptide is Iron sulfur cluster assembly protein 1, mitochondrial (isu1) (Schizosaccharomyces pombe (strain 972 / ATCC 24843) (Fission yeast)).